The following is a 153-amino-acid chain: MAARRKARKRALDLLYEADQKAVSGGAPASGDAVALLAERIATPHGEAPMREYTVEIVEGVAAHQARIDELLETYAQGWSLERMPAVDRAILRIGVWELLFNDDVPDAVAVDEAVALAAELSTDDSPTFVNGLLGQLLRLAPVLRDEEAAAGG.

It belongs to the NusB family.

Functionally, involved in transcription antitermination. Required for transcription of ribosomal RNA (rRNA) genes. Binds specifically to the boxA antiterminator sequence of the ribosomal RNA (rrn) operons. In Beutenbergia cavernae (strain ATCC BAA-8 / DSM 12333 / CCUG 43141 / JCM 11478 / NBRC 16432 / NCIMB 13614 / HKI 0122), this protein is Transcription antitermination protein NusB.